The chain runs to 350 residues: Sperm equatorial segment protein 1 (350 aa).

Residues 1–19 (MKPLVLLVALLLWPSSVPA) form the signal peptide. A glycan (N-linked (GlcNAc...) asparagine) is linked at N128.

The protein belongs to the SPESP1 family. Post-translationally, glycosylated. In testis there are two predominant forms of 77- and 67-kDa and a form of 47-kDa, whereas in epididymal sperm from caput, corpus, and cauda there are two forms of 47- and 43-kDa. Testis forms contain complex carbohydrate residues. Epididymal sperm forms are N-glycosylated. Then undergoes significant glycosylation in the testis and that the majority of these glycoconjugates are removed by the time sperm reach the caput epididymis. As to expression, highly expressed in testis, where it is localized in the acrosome of postmeiotic stages of spermiogenesis (round and elongating spermatids and in ejaculated spermatozoa) (at protein level). Poorly expressed in placenta and fetal lung.

It localises to the cytoplasmic vesicle. Its subcellular location is the secretory vesicle. The protein resides in the acrosome. Its function is as follows. Involved in fertilization ability of sperm. The protein is Sperm equatorial segment protein 1 of Homo sapiens (Human).